We begin with the raw amino-acid sequence, 646 residues long: MAQISLTFPDGNAREFPAGITPAEVAASISTSLGKKAISASVDGRHYDLQWPIEADAKIAIHTMADEAQALELIRHDLAHIMARAVQELWPDVKVTIGPVVANGWYYDFDREETFTPEDLGAIEKRMKEIINARDAVRTETWDRDRAIAHYEARGENFKVELVQAIPADQQIRMYWHGNWQDLCRGPHLQHTGQVPADAFQLMSVAGAYWRGDSNNKQLQRIYGVAFKTRDELKAYLHMLEEAAKRDHRKLGKEMELFHLQEEAPGMVFWHPNGWQIYRTLEDYMRGRLRKAGYKEIRTPQVVDRKLWEASGHWEAYKENMFLVEVEEEHAKEKRINALKPMNCPCHVQVYNQGLKSYRDLPLRLAEFGSCHRYESSGSMHGLMRVRGFVQDDAHIFCTEDQIEGECAAFIELLSSVYKDLGFDSFEIKLSTRPEVRIGSDEAWDKVETALENAIKKVGAAYEIDPGEGAFYGPKLDFKLTDAIGRKWQCGTFQVDPNLPTRLGAEYIGEDGAKHRPYMLHRAILGSFERFIGILIENYAGKLPFWLAPRQVVVASIVSDADPYVAEVVAALRARGVRAEADTRNEKINYKVREHSVGKVPVILAIGMQEVEGRTVSVRRLGETGTESAPLDQVVERLATDARIPG.

Residues 1-63 (MAQISLTFPD…EADAKIAIHT (63 aa)) enclose the TGS domain. The catalytic stretch occupies residues 247-544 (DHRKLGKEME…LIENYAGKLP (298 aa)). Cys-344, His-395, and His-521 together coordinate Zn(2+).

Belongs to the class-II aminoacyl-tRNA synthetase family. In terms of assembly, homodimer. Requires Zn(2+) as cofactor.

The protein resides in the cytoplasm. It carries out the reaction tRNA(Thr) + L-threonine + ATP = L-threonyl-tRNA(Thr) + AMP + diphosphate + H(+). In terms of biological role, catalyzes the attachment of threonine to tRNA(Thr) in a two-step reaction: L-threonine is first activated by ATP to form Thr-AMP and then transferred to the acceptor end of tRNA(Thr). Also edits incorrectly charged L-seryl-tRNA(Thr). This Cereibacter sphaeroides (strain ATCC 17025 / ATH 2.4.3) (Rhodobacter sphaeroides) protein is Threonine--tRNA ligase.